Consider the following 81-residue polypeptide: ATP synthase subunit c, chloroplastic (81 aa).

The next 2 membrane-spanning stretches (helical) occupy residues 3–23 (PLISAASVIAAGLAVGLASIG) and 53–73 (LLLSLAFMEALTIYGLVVALA).

The protein belongs to the ATPase C chain family. F-type ATPases have 2 components, F(1) - the catalytic core - and F(0) - the membrane proton channel. F(1) has five subunits: alpha(3), beta(3), gamma(1), delta(1), epsilon(1). F(0) has four main subunits: a(1), b(1), b'(1) and c(10-14). The alpha and beta chains form an alternating ring which encloses part of the gamma chain. F(1) is attached to F(0) by a central stalk formed by the gamma and epsilon chains, while a peripheral stalk is formed by the delta, b and b' chains.

Its subcellular location is the plastid. The protein resides in the chloroplast thylakoid membrane. F(1)F(0) ATP synthase produces ATP from ADP in the presence of a proton or sodium gradient. F-type ATPases consist of two structural domains, F(1) containing the extramembraneous catalytic core and F(0) containing the membrane proton channel, linked together by a central stalk and a peripheral stalk. During catalysis, ATP synthesis in the catalytic domain of F(1) is coupled via a rotary mechanism of the central stalk subunits to proton translocation. Functionally, key component of the F(0) channel; it plays a direct role in translocation across the membrane. A homomeric c-ring of between 10-14 subunits forms the central stalk rotor element with the F(1) delta and epsilon subunits. This Angiopteris evecta (Mule's foot fern) protein is ATP synthase subunit c, chloroplastic.